A 443-amino-acid polypeptide reads, in one-letter code: Trigger factor (443 aa).

The 86-residue stretch at 165-250 (GDQVVMDFVG…IKEVKEPVAA (86 aa)) folds into the PPIase FKBP-type domain.

The protein belongs to the FKBP-type PPIase family. Tig subfamily.

It localises to the cytoplasm. It carries out the reaction [protein]-peptidylproline (omega=180) = [protein]-peptidylproline (omega=0). Its function is as follows. Involved in protein export. Acts as a chaperone by maintaining the newly synthesized protein in an open conformation. Functions as a peptidyl-prolyl cis-trans isomerase. This chain is Trigger factor, found in Ruegeria pomeroyi (strain ATCC 700808 / DSM 15171 / DSS-3) (Silicibacter pomeroyi).